Consider the following 282-residue polypeptide: Phosphatidylserine decarboxylase proenzyme (282 aa).

Catalysis depends on charge relay system; for autoendoproteolytic cleavage activity residues D88, H144, and S247. Residue S247 is the Schiff-base intermediate with substrate; via pyruvic acid; for decarboxylase activity of the active site. S247 bears the Pyruvic acid (Ser); by autocatalysis mark.

The protein belongs to the phosphatidylserine decarboxylase family. PSD-B subfamily. Prokaryotic type I sub-subfamily. As to quaternary structure, heterodimer of a large membrane-associated beta subunit and a small pyruvoyl-containing alpha subunit. Pyruvate is required as a cofactor. In terms of processing, is synthesized initially as an inactive proenzyme. Formation of the active enzyme involves a self-maturation process in which the active site pyruvoyl group is generated from an internal serine residue via an autocatalytic post-translational modification. Two non-identical subunits are generated from the proenzyme in this reaction, and the pyruvate is formed at the N-terminus of the alpha chain, which is derived from the carboxyl end of the proenzyme. The autoendoproteolytic cleavage occurs by a canonical serine protease mechanism, in which the side chain hydroxyl group of the serine supplies its oxygen atom to form the C-terminus of the beta chain, while the remainder of the serine residue undergoes an oxidative deamination to produce ammonia and the pyruvoyl prosthetic group on the alpha chain. During this reaction, the Ser that is part of the protease active site of the proenzyme becomes the pyruvoyl prosthetic group, which constitutes an essential element of the active site of the mature decarboxylase.

Its subcellular location is the cell membrane. The catalysed reaction is a 1,2-diacyl-sn-glycero-3-phospho-L-serine + H(+) = a 1,2-diacyl-sn-glycero-3-phosphoethanolamine + CO2. It functions in the pathway phospholipid metabolism; phosphatidylethanolamine biosynthesis; phosphatidylethanolamine from CDP-diacylglycerol: step 2/2. In terms of biological role, catalyzes the formation of phosphatidylethanolamine (PtdEtn) from phosphatidylserine (PtdSer). The polypeptide is Phosphatidylserine decarboxylase proenzyme (Xanthomonas campestris pv. campestris (strain B100)).